The following is a 387-amino-acid chain: UDP-N-acetylglucosamine--N-acetylmuramyl-(pentapeptide) pyrophosphoryl-undecaprenol N-acetylglucosamine transferase (387 aa).

UDP-N-acetyl-alpha-D-glucosamine is bound by residues 23-25 (TGG), Asn135, Arg174, Ser203, Ile261, 280-285 (ALTVSE), and Gln306.

The protein belongs to the glycosyltransferase 28 family. MurG subfamily.

The protein localises to the cell inner membrane. The enzyme catalyses di-trans,octa-cis-undecaprenyl diphospho-N-acetyl-alpha-D-muramoyl-L-alanyl-D-glutamyl-meso-2,6-diaminopimeloyl-D-alanyl-D-alanine + UDP-N-acetyl-alpha-D-glucosamine = di-trans,octa-cis-undecaprenyl diphospho-[N-acetyl-alpha-D-glucosaminyl-(1-&gt;4)]-N-acetyl-alpha-D-muramoyl-L-alanyl-D-glutamyl-meso-2,6-diaminopimeloyl-D-alanyl-D-alanine + UDP + H(+). The protein operates within cell wall biogenesis; peptidoglycan biosynthesis. Functionally, cell wall formation. Catalyzes the transfer of a GlcNAc subunit on undecaprenyl-pyrophosphoryl-MurNAc-pentapeptide (lipid intermediate I) to form undecaprenyl-pyrophosphoryl-MurNAc-(pentapeptide)GlcNAc (lipid intermediate II). The protein is UDP-N-acetylglucosamine--N-acetylmuramyl-(pentapeptide) pyrophosphoryl-undecaprenol N-acetylglucosamine transferase of Colwellia psychrerythraea (strain 34H / ATCC BAA-681) (Vibrio psychroerythus).